Consider the following 502-residue polypeptide: Glycerol kinase (502 aa).

T14 lines the ADP pocket. The ATP site is built by T14, T15, and S16. T14 contributes to the sn-glycerol 3-phosphate binding site. R18 contacts ADP. Sn-glycerol 3-phosphate contacts are provided by R84, E85, Y136, and D246. Residues R84, E85, Y136, D246, and Q247 each contribute to the glycerol site. Residues T268 and G311 each contribute to the ADP site. ATP contacts are provided by T268, G311, Q315, and G412. ADP contacts are provided by G412 and N416.

It belongs to the FGGY kinase family. In terms of assembly, homotetramer and homodimer (in equilibrium). Heterodimer with EIIA-Glc. Binds 1 zinc ion per glycerol kinase EIIA-Glc dimer. The zinc ion is important for dimerization.

It catalyses the reaction glycerol + ATP = sn-glycerol 3-phosphate + ADP + H(+). Its pathway is polyol metabolism; glycerol degradation via glycerol kinase pathway; sn-glycerol 3-phosphate from glycerol: step 1/1. Its activity is regulated as follows. Activity of this regulatory enzyme is affected by several metabolites. Allosterically and non-competitively inhibited by fructose 1,6-bisphosphate (FBP) and unphosphorylated phosphocarrier protein EIIA-Glc (III-Glc), an integral component of the bacterial phosphotransferase (PTS) system. In terms of biological role, key enzyme in the regulation of glycerol uptake and metabolism. Catalyzes the phosphorylation of glycerol to yield sn-glycerol 3-phosphate. In Shigella boydii serotype 18 (strain CDC 3083-94 / BS512), this protein is Glycerol kinase.